The following is a 370-amino-acid chain: 3-dehydroquinate synthase (370 aa).

NAD(+)-binding positions include 107–111, 131–132, Lys-144, and Lys-153; these read GVIGD and TS. Residues Glu-186, His-249, and His-267 each contribute to the Zn(2+) site.

The protein belongs to the sugar phosphate cyclases superfamily. Dehydroquinate synthase family. It depends on Co(2+) as a cofactor. Zn(2+) serves as cofactor. The cofactor is NAD(+).

It is found in the cytoplasm. It carries out the reaction 7-phospho-2-dehydro-3-deoxy-D-arabino-heptonate = 3-dehydroquinate + phosphate. Its pathway is metabolic intermediate biosynthesis; chorismate biosynthesis; chorismate from D-erythrose 4-phosphate and phosphoenolpyruvate: step 2/7. Its function is as follows. Catalyzes the conversion of 3-deoxy-D-arabino-heptulosonate 7-phosphate (DAHP) to dehydroquinate (DHQ). This is 3-dehydroquinate synthase from Jannaschia sp. (strain CCS1).